The chain runs to 70 residues: Large ribosomal subunit protein eL43 (70 aa).

Positions 36, 39, 55, and 58 each coordinate Zn(2+). A C4-type zinc finger spans residues 36–58 (CPVCKTTGKVVRIASGVWYCKKC).

It belongs to the eukaryotic ribosomal protein eL43 family. Putative zinc-binding subfamily. As to quaternary structure, part of the 50S ribosomal subunit. Zn(2+) serves as cofactor.

Functionally, binds to the 23S rRNA. In Sulfurisphaera tokodaii (strain DSM 16993 / JCM 10545 / NBRC 100140 / 7) (Sulfolobus tokodaii), this protein is Large ribosomal subunit protein eL43.